The chain runs to 405 residues: MTKKVNKVVLAYSGGLDTSVILKWLQETYNCEVVTFTADIGQGEEVEPAREKALKLGIKPENIFIEDLKEEFVRDYVFPMFRANAIYEGEYLLGTSIARPLIAKRQIEIARQVGADAVAHGATGKGNDQVRFEIAYLSLNPDITVIAPWREWDLNSREKLLKFAEEHRIPIEKHGKKSPYSMDANLLHISYEGGILEDPWAEPEEDMWRWTNSIENAPNEPEYITIDFEKGDPVAINGEPLSPAKLLEALNEYGKKHGIGRIDIVENRFVGMKSRGCYETPGGTILLKAHRAMESITLDREEAHEKDKLMPKYAELIYNGFWFSPEREMMQAAIDKTQENVSGTVRLKLYKGNVFVVGRKSPNSLFAPEFSTFEEDEVYNQKDAQGFIKLNALRFIIEGHVRRKK.

ATP contacts are provided by residues 11–19 (AYSGGLDTS) and Ala38. Residues Tyr91 and Ser96 each contribute to the L-citrulline site. Residue Gly121 coordinates ATP. L-aspartate contacts are provided by Thr123, Asn127, and Asp128. Asn127 contributes to the L-citrulline binding site. Residues Arg131, Ser181, Ser190, Glu266, and Tyr278 each coordinate L-citrulline.

The protein belongs to the argininosuccinate synthase family. Type 1 subfamily. As to quaternary structure, homotetramer.

It localises to the cytoplasm. It carries out the reaction L-citrulline + L-aspartate + ATP = 2-(N(omega)-L-arginino)succinate + AMP + diphosphate + H(+). Its pathway is amino-acid biosynthesis; L-arginine biosynthesis; L-arginine from L-ornithine and carbamoyl phosphate: step 2/3. In Nitratiruptor sp. (strain SB155-2), this protein is Argininosuccinate synthase.